Consider the following 254-residue polypeptide: Type III pantothenate kinase (254 aa).

7-14 contributes to the ATP binding site; it reads DVGNTRLK. Substrate-binding positions include Tyr96 and 103–106; that span reads GSDR. The active-site Proton acceptor is the Asp105. Thr133 contacts ATP. Thr183 serves as a coordination point for substrate.

The protein belongs to the type III pantothenate kinase family. In terms of assembly, homodimer. NH4(+) serves as cofactor. Requires K(+) as cofactor.

The protein localises to the cytoplasm. The enzyme catalyses (R)-pantothenate + ATP = (R)-4'-phosphopantothenate + ADP + H(+). It functions in the pathway cofactor biosynthesis; coenzyme A biosynthesis; CoA from (R)-pantothenate: step 1/5. Functionally, catalyzes the phosphorylation of pantothenate (Pan), the first step in CoA biosynthesis. The polypeptide is Type III pantothenate kinase (Paracidovorax citrulli (strain AAC00-1) (Acidovorax citrulli)).